Reading from the N-terminus, the 244-residue chain is 3-deoxy-manno-octulosonate cytidylyltransferase (244 aa).

Belongs to the KdsB family.

Its subcellular location is the cytoplasm. It carries out the reaction 3-deoxy-alpha-D-manno-oct-2-ulosonate + CTP = CMP-3-deoxy-beta-D-manno-octulosonate + diphosphate. It participates in nucleotide-sugar biosynthesis; CMP-3-deoxy-D-manno-octulosonate biosynthesis; CMP-3-deoxy-D-manno-octulosonate from 3-deoxy-D-manno-octulosonate and CTP: step 1/1. Its pathway is bacterial outer membrane biogenesis; lipopolysaccharide biosynthesis. In terms of biological role, activates KDO (a required 8-carbon sugar) for incorporation into bacterial lipopolysaccharide in Gram-negative bacteria. The polypeptide is 3-deoxy-manno-octulosonate cytidylyltransferase (Wolinella succinogenes (strain ATCC 29543 / DSM 1740 / CCUG 13145 / JCM 31913 / LMG 7466 / NCTC 11488 / FDC 602W) (Vibrio succinogenes)).